A 448-amino-acid polypeptide reads, in one-letter code: 3-phosphoshikimate 1-carboxyvinyltransferase (448 aa).

Residues Lys28, Ser29, and Arg33 each coordinate 3-phosphoshikimate. Lys28 contacts phosphoenolpyruvate. Residues Gly100 and Arg128 each coordinate phosphoenolpyruvate. Positions 173, 175, 326, and 353 each coordinate 3-phosphoshikimate. Gln175 is a binding site for phosphoenolpyruvate. The active-site Proton acceptor is the Asp326. Residues Arg357 and Arg405 each coordinate phosphoenolpyruvate.

The protein belongs to the EPSP synthase family. Monomer.

Its subcellular location is the cytoplasm. It catalyses the reaction 3-phosphoshikimate + phosphoenolpyruvate = 5-O-(1-carboxyvinyl)-3-phosphoshikimate + phosphate. It participates in metabolic intermediate biosynthesis; chorismate biosynthesis; chorismate from D-erythrose 4-phosphate and phosphoenolpyruvate: step 6/7. In terms of biological role, catalyzes the transfer of the enolpyruvyl moiety of phosphoenolpyruvate (PEP) to the 5-hydroxyl of shikimate-3-phosphate (S3P) to produce enolpyruvyl shikimate-3-phosphate and inorganic phosphate. The chain is 3-phosphoshikimate 1-carboxyvinyltransferase from Sinorhizobium fredii (strain NBRC 101917 / NGR234).